Reading from the N-terminus, the 523-residue chain is Probable malate:quinone oxidoreductase 1 (523 aa).

This sequence belongs to the MQO family. The cofactor is FAD.

It catalyses the reaction (S)-malate + a quinone = a quinol + oxaloacetate. The protein operates within carbohydrate metabolism; tricarboxylic acid cycle; oxaloacetate from (S)-malate (quinone route): step 1/1. The chain is Probable malate:quinone oxidoreductase 1 from Pseudomonas aeruginosa (strain ATCC 15692 / DSM 22644 / CIP 104116 / JCM 14847 / LMG 12228 / 1C / PRS 101 / PAO1).